The sequence spans 231 residues: 2-C-methyl-D-erythritol 4-phosphate cytidylyltransferase (231 aa).

It belongs to the IspD/TarI cytidylyltransferase family. IspD subfamily.

It carries out the reaction 2-C-methyl-D-erythritol 4-phosphate + CTP + H(+) = 4-CDP-2-C-methyl-D-erythritol + diphosphate. The protein operates within isoprenoid biosynthesis; isopentenyl diphosphate biosynthesis via DXP pathway; isopentenyl diphosphate from 1-deoxy-D-xylulose 5-phosphate: step 2/6. Its function is as follows. Catalyzes the formation of 4-diphosphocytidyl-2-C-methyl-D-erythritol from CTP and 2-C-methyl-D-erythritol 4-phosphate (MEP). The protein is 2-C-methyl-D-erythritol 4-phosphate cytidylyltransferase of Rubrobacter xylanophilus (strain DSM 9941 / JCM 11954 / NBRC 16129 / PRD-1).